A 526-amino-acid chain; its full sequence is Peptide chain release factor 3 (526 aa).

The tr-type G domain maps to 8 to 277 (NKRRTFAIIS…GLTQWAPAPQ (270 aa)). GTP contacts are provided by residues 17–24 (SHPDAGKT), 85–89 (DTPGH), and 139–142 (NKLD).

The protein belongs to the TRAFAC class translation factor GTPase superfamily. Classic translation factor GTPase family. PrfC subfamily.

The protein localises to the cytoplasm. In terms of biological role, increases the formation of ribosomal termination complexes and stimulates activities of RF-1 and RF-2. It binds guanine nucleotides and has strong preference for UGA stop codons. It may interact directly with the ribosome. The stimulation of RF-1 and RF-2 is significantly reduced by GTP and GDP, but not by GMP. The sequence is that of Peptide chain release factor 3 from Histophilus somni (strain 129Pt) (Haemophilus somnus).